Reading from the N-terminus, the 624-residue chain is Interleukin-1 receptor-associated kinase-like 2 (624 aa).

In terms of domain architecture, Death spans 13–94; the sequence is LDDLCRNIDT…RAAQIVLSWK (82 aa). The 266-residue stretch at 210–475 folds into the Protein kinase domain; sequence FDQSHRISEG…LPEACAETWA (266 aa). Residues 216–224, Lys-237, and 337–340 contribute to the ATP site; these read ISEGTFADI and KSAN. Disordered regions lie at residues 508 to 536 and 549 to 593; these read SLPW…NSSL and RVSS…ETSW. Residues 558-577 are compositionally biased toward polar residues; the sequence is GNGTAQPSTSGRQEADSSSE.

Belongs to the protein kinase superfamily. TKL Ser/Thr protein kinase family. Pelle subfamily. Interacts with MYD88. IL-1 stimulation leads to the formation of a signaling complex which dissociates from the IL-1 receptor following the binding of PELI1.

Its function is as follows. Binds to the IL-1 type I receptor following IL-1 engagement, triggering intracellular signaling cascades leading to transcriptional up-regulation and mRNA stabilization. In Rattus norvegicus (Rat), this protein is Interleukin-1 receptor-associated kinase-like 2 (Irak2).